Reading from the N-terminus, the 113-residue chain is Large ribosomal subunit protein bL19 (113 aa).

This sequence belongs to the bacterial ribosomal protein bL19 family.

Its function is as follows. This protein is located at the 30S-50S ribosomal subunit interface and may play a role in the structure and function of the aminoacyl-tRNA binding site. The chain is Large ribosomal subunit protein bL19 from Corynebacterium efficiens (strain DSM 44549 / YS-314 / AJ 12310 / JCM 11189 / NBRC 100395).